The following is a 434-amino-acid chain: UDP-N-acetylmuramate--L-alanine ligase (434 aa).

ATP is bound at residue 108 to 114 (GSHGKTT).

Belongs to the MurCDEF family.

The protein resides in the cytoplasm. It catalyses the reaction UDP-N-acetyl-alpha-D-muramate + L-alanine + ATP = UDP-N-acetyl-alpha-D-muramoyl-L-alanine + ADP + phosphate + H(+). It functions in the pathway cell wall biogenesis; peptidoglycan biosynthesis. Its function is as follows. Cell wall formation. The chain is UDP-N-acetylmuramate--L-alanine ligase from Geobacillus thermodenitrificans (strain NG80-2).